The primary structure comprises 1198 residues: Tetratricopeptide repeat protein 17 (1198 aa).

A TPR 1 repeat occupies 295–328 (FTSYYTLGNIYAMLGEYNHSVLCYDHALQAKPGF). A coiled-coil region spans residues 340 to 382 (CQQKLEQKLEAQHRSLQRTLNELKEYQKQHDHYLRQQEILEKH). TPR repeat units follow at residues 619 to 652 (WLIL…APVQ) and 689 to 722 (PLTF…TTRC). Disordered regions lie at residues 771 to 825 (PQSL…KSEE) and 903 to 924 (KKPK…QAEN). The span at 903–914 (KKPKGDHKKPPG) shows a compositional bias: basic residues. TPR repeat units follow at residues 1071–1105 (SWVL…APHQ), 1108–1141 (DVPL…APHF), and 1142–1175 (AVNH…QPEF).

It belongs to the TTC17 family. In terms of assembly, interacts with CATIP. Expressed in germ cells as well as in somatic cells of the testis (at protein level). Ubiquitous.

The protein resides in the cytoplasm. It is found in the cell membrane. It localises to the cytoskeleton. In terms of biological role, plays a role in primary ciliogenesis by modulating actin polymerization. The chain is Tetratricopeptide repeat protein 17 (Ttc17) from Rattus norvegicus (Rat).